We begin with the raw amino-acid sequence, 393 residues long: Dwarfin sma-3 (393 aa).

The region spanning 10 to 139 (PAVKKLLGWK…YQRLSRPQGL (130 aa)) is the MH1 domain. Residues Cys65, Cys110, Cys124, and His129 each coordinate Zn(2+). The interval 136 to 190 (PQGLNSSMPSPQPISSPNTIWQSSGSSTASCASSPSPSVFSEDGGEVQVHQRPPP) is disordered. A compositionally biased stretch (low complexity) spans 141 to 176 (SSMPSPQPISSPNTIWQSSGSSTASCASSPSPSVFS). One can recognise an MH2 domain in the interval 197–393 (WAQITYFELN…TNLMEPNSMT (197 aa)).

This sequence belongs to the dwarfin/SMAD family.

The protein localises to the cytoplasm. The protein resides in the nucleus. Involved in TGF-beta pathway. Plays a role in male tail tip morphogenesis. The chain is Dwarfin sma-3 from Caenorhabditis elegans.